The sequence spans 100 residues: MICOS complex subunit MIC12 (100 aa).

The helical transmembrane segment at 10-26 (FATISSVAAASLYLYAI) threads the bilayer.

The protein belongs to the MICOS complex subunit Mic12 family. In terms of assembly, component of the mitochondrial contact site and cristae organizing system (MICOS) complex.

The protein resides in the mitochondrion inner membrane. In terms of biological role, component of the MICOS complex, a large protein complex of the mitochondrial inner membrane that plays crucial roles in the maintenance of crista junctions, inner membrane architecture, and formation of contact sites to the outer membrane. The polypeptide is MICOS complex subunit MIC12 (AIM5) (Vanderwaltozyma polyspora (strain ATCC 22028 / DSM 70294 / BCRC 21397 / CBS 2163 / NBRC 10782 / NRRL Y-8283 / UCD 57-17) (Kluyveromyces polysporus)).